The primary structure comprises 746 residues: Polyribonucleotide nucleotidyltransferase (746 aa).

Mg(2+) contacts are provided by Asp-490 and Asp-496. A KH domain is found at 557–619 (PRIETMIIGK…ATIDAAVKAI (63 aa)). The 71-residue stretch at 629 to 699 (GEVYEGKISS…KTGKFKLSRK (71 aa)) folds into the S1 motif domain. Residues 701–746 (LLPKPEGYEERPPRPERGERGPRQDRGDRGPRQDRGDRGPRREYRD) form a disordered region. The segment covering 706–746 (EGYEERPPRPERGERGPRQDRGDRGPRQDRGDRGPRREYRD) has biased composition (basic and acidic residues).

It belongs to the polyribonucleotide nucleotidyltransferase family. Requires Mg(2+) as cofactor.

It is found in the cytoplasm. It catalyses the reaction RNA(n+1) + phosphate = RNA(n) + a ribonucleoside 5'-diphosphate. Functionally, involved in mRNA degradation. Catalyzes the phosphorolysis of single-stranded polyribonucleotides processively in the 3'- to 5'-direction. This chain is Polyribonucleotide nucleotidyltransferase, found in Parabacteroides distasonis (strain ATCC 8503 / DSM 20701 / CIP 104284 / JCM 5825 / NCTC 11152).